The following is a 405-amino-acid chain: MKKVIKKIALAYSGGLDTSIMIPWLKEHYEHAEVIAVICDLGQQEDLDTIKNKALKSGASKAYVVDVKNEFAIQYLWPLVKSGALYEDQYILGTISRPLIAQKLVEIALTEQVNAVAHGATGKGNDQVRFEYSIKALAPQLEIIAPWRTWDIKSRQEAIVYAKAHGIEVPVTPKAPYSRDHNIWYISHEGGVLEDPSQEMPDDVLLMTAPVSQTPDEEEVVVLDFKKGVPVALNGQELSPVDLLNSLNQKAGQHGIGVADIVENRLVGMKIRGIYEAPAAAVLYKAHKLLESLCLTRSTLHLKQSLQQTYANLVYEGRWFSQTKQALDAFIDVTQQHVTGCVKLKLFKGNIIPAGMHSPYSLHHPELATFEEDNVYNQKDAEGFINLFSLSAKIYSQVHQEGNYD.

An ATP-binding site is contributed by 11 to 19 (AYSGGLDTS). An L-citrulline-binding site is contributed by Y90. G119 contacts ATP. Positions 121, 125, and 126 each coordinate L-aspartate. N125 lines the L-citrulline pocket. Residues R129, S178, S187, E263, and Y275 each coordinate L-citrulline.

The protein belongs to the argininosuccinate synthase family. Type 1 subfamily. Homotetramer.

The protein resides in the cytoplasm. The catalysed reaction is L-citrulline + L-aspartate + ATP = 2-(N(omega)-L-arginino)succinate + AMP + diphosphate + H(+). Its pathway is amino-acid biosynthesis; L-arginine biosynthesis; L-arginine from L-ornithine and carbamoyl phosphate: step 2/3. The sequence is that of Argininosuccinate synthase from Legionella pneumophila (strain Corby).